Here is a 351-residue protein sequence, read N- to C-terminus: Putative glycosyltransferase 45 (351 aa).

Belongs to the glycosyltransferase group 1 family.

This is Putative glycosyltransferase 45 (SIFV0045) from Sulfolobus islandicus filamentous virus (isolate Iceland/Hveragerdi) (SIFV).